Here is a 79-residue protein sequence, read N- to C-terminus: Moronecidin (79 aa).

The signal sequence occupies residues 1–22 (MKCATLSLVLSMVVLMAEPGDA). At Gly-44 the chain carries Glycine amide. Residues 45–68 (GKAEQDQQDQQYQQDQQDQQAQQY) are disordered. Residues 47–79 (AEQDQQDQQYQQDQQDQQAQQYQRFNRERAAFD) constitute a propeptide that is removed on maturation. Residues 52–68 (QDQQYQQDQQDQQAQQY) show a composition bias toward low complexity.

As to expression, expressed in gill, skin, intestine, spleen, anterior kidney, and blood cells.

The protein resides in the secreted. In terms of biological role, antimicrobial peptide with broad-spectrum activity against Gram-positive and Gram-negative bacteria as well as against a variety of fungi. Rapidly inactivates both channel catfish herpesvirus (ED(50)=4 uM) and frog virus 3 (ED(50)=13 uM) over a wide temperature range. Seems to disrupt the membranes by adopting an alpha helical conformation. The polypeptide is Moronecidin (Morone chrysops (White bass)).